Here is a 424-residue protein sequence, read N- to C-terminus: Set1 complex component spp1 (424 aa).

The tract at residues 80–108 is disordered; it reads QQPTIPKKPPVSAHRRGPRKHRGNANSQL. Basic residues predominate over residues 92–102; sequence AHRRGPRKHRG. The segment at 118-168 adopts a PHD-type zinc-finger fold; sequence PLYCICQKPDDGSWMLGCDGCEDWFHGTCVNIPESYNDLTVQYFCPKCTEE.

As to quaternary structure, component of the Set1 complex composed of ash2, sdc1, set1, shg1, spp1, swd1, swd2 and swd3.

It is found in the nucleus. The Set1 complex specifically methylates 'Lys-4' of histone H3. The chain is Set1 complex component spp1 (spp1) from Schizosaccharomyces pombe (strain 972 / ATCC 24843) (Fission yeast).